A 159-amino-acid polypeptide reads, in one-letter code: Ribosomal RNA large subunit methyltransferase H (159 aa).

S-adenosyl-L-methionine-binding positions include leucine 76, glycine 108, and 127–132; that span reads FSKMTF.

Belongs to the RNA methyltransferase RlmH family. In terms of assembly, homodimer.

It localises to the cytoplasm. It carries out the reaction pseudouridine(1915) in 23S rRNA + S-adenosyl-L-methionine = N(3)-methylpseudouridine(1915) in 23S rRNA + S-adenosyl-L-homocysteine + H(+). In terms of biological role, specifically methylates the pseudouridine at position 1915 (m3Psi1915) in 23S rRNA. The chain is Ribosomal RNA large subunit methyltransferase H from Bifidobacterium longum subsp. infantis (strain ATCC 15697 / DSM 20088 / JCM 1222 / NCTC 11817 / S12).